Consider the following 214-residue polypeptide: Cytochrome b (214 aa).

4 helical membrane passes run 31 to 51, 75 to 96, 111 to 131, and 176 to 196; these read FGSM…FLAI, WIMQ…YIHI, WLSG…GYVL, and FFAL…AHIL. Heme b contacts are provided by Xaa81 and His95. 2 residues coordinate heme b: His180 and His194. His199 serves as a coordination point for a ubiquinone.

It belongs to the cytochrome b family. In terms of assembly, the cytochrome bc1 complex contains 3 respiratory subunits (MT-CYB, CYC1 and UQCRFS1), 2 core proteins (UQCRC1 and UQCRC2) and probably 6 low-molecular weight proteins. Heme b serves as cofactor.

It localises to the mitochondrion inner membrane. Component of the ubiquinol-cytochrome c reductase complex (complex III or cytochrome b-c1 complex) that is part of the mitochondrial respiratory chain. The b-c1 complex mediates electron transfer from ubiquinol to cytochrome c. Contributes to the generation of a proton gradient across the mitochondrial membrane that is then used for ATP synthesis. This chain is Cytochrome b (MT-CYB), found in Bothriechis schlegelii (Eyelash palm pitviper).